A 508-amino-acid polypeptide reads, in one-letter code: Aldehyde dehydrogenase family 7 member B4 (508 aa).

244–249 (GSSRVG) is a binding site for NAD(+). The active-site Proton acceptor is Glu266. The active-site Nucleophile is Cys300.

It belongs to the aldehyde dehydrogenase family. As to quaternary structure, homotetramer.

It carries out the reaction an aldehyde + NAD(+) + H2O = a carboxylate + NADH + 2 H(+). This Arabidopsis thaliana (Mouse-ear cress) protein is Aldehyde dehydrogenase family 7 member B4 (ALDH7B4).